The sequence spans 306 residues: Agmatinase (306 aa).

Mn(2+) contacts are provided by histidine 126, aspartate 149, histidine 151, aspartate 153, aspartate 230, and aspartate 232.

It belongs to the arginase family. Agmatinase subfamily. Requires Mn(2+) as cofactor.

The enzyme catalyses agmatine + H2O = urea + putrescine. It participates in amine and polyamine biosynthesis; putrescine biosynthesis via agmatine pathway; putrescine from agmatine: step 1/1. In terms of biological role, catalyzes the formation of putrescine from agmatine. The protein is Agmatinase of Escherichia coli O7:K1 (strain IAI39 / ExPEC).